The primary structure comprises 475 residues: Ribosomal protein uS12 methylthiotransferase RimO (475 aa).

An MTTase N-terminal domain is found at 5–114 (RTVRLIRLGC…IAQRLEDVLA (110 aa)). [4Fe-4S] cluster-binding residues include Cys-14, Cys-49, Cys-78, Cys-174, Cys-178, and Cys-181. A Radical SAM core domain is found at 160-390 (LDDSPVAPLK…AGIAEEVTAD (231 aa)). The TRAM domain maps to 393 to 461 (RARLGETVDV…GVDFLAAPVT (69 aa)).

It belongs to the methylthiotransferase family. RimO subfamily. Requires [4Fe-4S] cluster as cofactor.

The protein localises to the cytoplasm. The catalysed reaction is L-aspartate(89)-[ribosomal protein uS12]-hydrogen + (sulfur carrier)-SH + AH2 + 2 S-adenosyl-L-methionine = 3-methylsulfanyl-L-aspartate(89)-[ribosomal protein uS12]-hydrogen + (sulfur carrier)-H + 5'-deoxyadenosine + L-methionine + A + S-adenosyl-L-homocysteine + 2 H(+). Functionally, catalyzes the methylthiolation of an aspartic acid residue of ribosomal protein uS12. In Acidothermus cellulolyticus (strain ATCC 43068 / DSM 8971 / 11B), this protein is Ribosomal protein uS12 methylthiotransferase RimO.